We begin with the raw amino-acid sequence, 435 residues long: MSSFSPREIVSELDRYIIGQKDAKRAVAIALRNRWRRQQLSDELRDEVMPKNILMIGPTGVGKTEISRRLAKLAGAPFVKVEATKFTEVGYVGRDVEQIVRDLVEVGISLVREKRRAEVKAKAHQNAEERVLDALVGTTASPATRDSFRKKLRANELDDKEIEVDVAETGNPGGAFEIPGMPGANIGVLNLSEMFGKALGGRTRKIKTTVKDSYALLVNDESDKLLDNEQIQREAVASAENDGIVFLDEIDKIATREGGIGAGVSREGVQRDLLPLVEGTTVATKYGPVKTDHILFIASGAFHVAKPSDLLPELQGRLPIRVELRALTKEDFRRILTETEASLIRQYKALLETEGVTLDFTEDAIDALAEVAVQLNSNVENIGARRLQTVMERVLDDVSFNAPDRGGQGVTIDADYVRVHVGDLAANTDLSRYIL.

ATP contacts are provided by residues Ile-18, 60-65 (GVGKTE), Asp-248, Glu-313, and Arg-385.

Belongs to the ClpX chaperone family. HslU subfamily. A double ring-shaped homohexamer of HslV is capped on each side by a ring-shaped HslU homohexamer. The assembly of the HslU/HslV complex is dependent on binding of ATP.

The protein localises to the cytoplasm. Its function is as follows. ATPase subunit of a proteasome-like degradation complex; this subunit has chaperone activity. The binding of ATP and its subsequent hydrolysis by HslU are essential for unfolding of protein substrates subsequently hydrolyzed by HslV. HslU recognizes the N-terminal part of its protein substrates and unfolds these before they are guided to HslV for hydrolysis. The chain is ATP-dependent protease ATPase subunit HslU from Sinorhizobium medicae (strain WSM419) (Ensifer medicae).